The following is a 388-amino-acid chain: F-box protein At3g49510 (388 aa).

The F-box domain occupies 1 to 47; sequence MTTISDLSDDLVGDILSRVPFTSLISVRSTCKKWNALSKNQIFGRKT.

The sequence is that of F-box protein At3g49510 from Arabidopsis thaliana (Mouse-ear cress).